Here is a 434-residue protein sequence, read N- to C-terminus: Methylenetetrahydrofolate--tRNA-(uracil-5-)-methyltransferase TrmFO (434 aa).

9 to 14 lines the FAD pocket; the sequence is GAGLAG.

It belongs to the MnmG family. TrmFO subfamily. FAD is required as a cofactor.

It localises to the cytoplasm. The catalysed reaction is uridine(54) in tRNA + (6R)-5,10-methylene-5,6,7,8-tetrahydrofolate + NADH + H(+) = 5-methyluridine(54) in tRNA + (6S)-5,6,7,8-tetrahydrofolate + NAD(+). It catalyses the reaction uridine(54) in tRNA + (6R)-5,10-methylene-5,6,7,8-tetrahydrofolate + NADPH + H(+) = 5-methyluridine(54) in tRNA + (6S)-5,6,7,8-tetrahydrofolate + NADP(+). In terms of biological role, catalyzes the folate-dependent formation of 5-methyl-uridine at position 54 (M-5-U54) in all tRNAs. The polypeptide is Methylenetetrahydrofolate--tRNA-(uracil-5-)-methyltransferase TrmFO (Listeria innocua serovar 6a (strain ATCC BAA-680 / CLIP 11262)).